We begin with the raw amino-acid sequence, 305 residues long: MARYKGLSILSLFAVFSSLASAELDCSNIKVDGVMWNFGKLGGAHSISETASSHEGYNTTYTLDICKPLTKTLCKKGAFVCAVRNATDINGIERTMDVIDIAGNFVLNSGRTLDPIFTRLKKEDPKTEGLKMELHGGKHKFGNLLKRQKAVITLLCDRERTGLEGLESPKPDGDKKKDGEKKDDDKKDNKDKEGKSKRDGEENKRSLIFKSYNEEEGTLDLEWKTKYACENVEDGGSAPSGHWGFFTWVIVLYVVLVSLPLLSERVTNVRCHSQPVPVHFGLSDIRLVAQLQPVWSSRVGLASSQ.

A signal peptide spans 1 to 22 (MARYKGLSILSLFAVFSSLASA). Residues 23–242 (ELDCSNIKVD…EDGGSAPSGH (220 aa)) lie on the Lumenal side of the membrane. Residues 24-231 (LDCSNIKVDG…EWKTKYACEN (208 aa)) form the MRH domain. Disulfide bonds link Cys-26–Cys-66 and Cys-74–Cys-81. An N-linked (GlcNAc...) asparagine glycan is attached at Asn-58. N-linked (GlcNAc...) asparagine glycosylation is present at Asn-85. Cys-156 and Cys-229 are joined by a disulfide. The tract at residues 163 to 202 (LEGLESPKPDGDKKKDGEKKDDDKKDNKDKEGKSKRDGEE) is disordered. Residues 243-263 (WGFFTWVIVLYVVLVSLPLLS) traverse the membrane as a helical segment. The Cytoplasmic segment spans residues 264 to 305 (ERVTNVRCHSQPVPVHFGLSDIRLVAQLQPVWSSRVGLASSQ).

It belongs to the ATG27 family.

It is found in the cytoplasmic vesicle membrane. The protein resides in the golgi apparatus membrane. The protein localises to the mitochondrion membrane. Its subcellular location is the preautophagosomal structure membrane. In terms of biological role, effector of phosphatidylinositol 3-phosphate kinase signaling. Regulates the cytoplasm to vacuole transport (Cvt) vesicle formation. Plays a role in ATG protein retrieval from the pre-autophagosomal structure (PAS). The polypeptide is Autophagy-related protein 27 (Arthroderma benhamiae (strain ATCC MYA-4681 / CBS 112371) (Trichophyton mentagrophytes)).